A 627-amino-acid chain; its full sequence is Mitochondrial distribution and morphology protein 34 (627 aa).

An SMP-LTD domain is found at 1-195 (MAFNFNWSPL…LPAIIHRLSL (195 aa)). Disordered regions lie at residues 209 to 230 (SAQV…NPPQ), 332 to 470 (ASLA…RTSP), 486 to 557 (LQRQ…SRPS), and 586 to 627 (RIQD…AYRH). Composition is skewed to low complexity over residues 215–225 (PSLDGPGLDPL) and 332–341 (ASLASSSHSR). The span at 360 to 372 (RHSKAHARKRKKR) shows a compositional bias: basic residues. The span at 373–384 (VVDLRRRPKSAD) shows a compositional bias: basic and acidic residues. A compositionally biased stretch (low complexity) spans 390–412 (SGESAYTETSTTTSAVSVFSGST). The span at 436 to 451 (TLRDRIAARDDAERNS) shows a compositional bias: basic and acidic residues. The segment covering 528 to 557 (PNASNNYTSSSSPSARDPQQQQPQQLSRPS) has biased composition (low complexity).

This sequence belongs to the MDM34 family. In terms of assembly, component of the ER-mitochondria encounter structure (ERMES) or MDM complex, composed of MMM1, MDM10, MDM12 and MDM34.

The protein localises to the mitochondrion outer membrane. In terms of biological role, component of the ERMES/MDM complex, which serves as a molecular tether to connect the endoplasmic reticulum (ER) and mitochondria. Components of this complex are involved in the control of mitochondrial shape and protein biogenesis, and function in nonvesicular lipid trafficking between the ER and mitochondria. MDM34 is required for the interaction of the ER-resident membrane protein MMM1 and the outer mitochondrial membrane-resident beta-barrel protein MDM10. This chain is Mitochondrial distribution and morphology protein 34, found in Blastomyces gilchristii (strain SLH14081) (Blastomyces dermatitidis).